Here is an 89-residue protein sequence, read N- to C-terminus: UPF0237 protein LMOf2365_0562 (89 aa).

The region spanning 4-78 (VLTVIGKDNV…EDLQVKIHIQ (75 aa)) is the ACT domain.

It belongs to the UPF0237 family.

The polypeptide is UPF0237 protein LMOf2365_0562 (Listeria monocytogenes serotype 4b (strain F2365)).